Here is an 885-residue protein sequence, read N- to C-terminus: Aconitate hydratase A (885 aa).

Positions 425, 491, and 494 each coordinate [4Fe-4S] cluster.

It belongs to the aconitase/IPM isomerase family. In terms of assembly, monomer. The cofactor is [4Fe-4S] cluster.

It carries out the reaction citrate = D-threo-isocitrate. The enzyme catalyses (2S,3R)-3-hydroxybutane-1,2,3-tricarboxylate = 2-methyl-cis-aconitate + H2O. It participates in carbohydrate metabolism; tricarboxylic acid cycle; isocitrate from oxaloacetate: step 2/2. Its pathway is organic acid metabolism; propanoate degradation. In terms of biological role, involved in the catabolism of short chain fatty acids (SCFA) via the tricarboxylic acid (TCA)(acetyl degradation route) and probably the 2-methylcitrate cycle I (propionate degradation route). Catalyzes the reversible isomerization of citrate to isocitrate via cis-aconitate. Could catalyze the hydration of 2-methyl-cis-aconitate to yield (2R,3S)-2-methylisocitrate. The apo form of AcnA functions as a RNA-binding regulatory protein. In Rickettsia bellii (strain RML369-C), this protein is Aconitate hydratase A (acnA).